We begin with the raw amino-acid sequence, 33 residues long: Brevinin-2Rk (33 aa).

An intrachain disulfide couples cysteine 27 to cysteine 33.

Expressed by the skin glands.

It localises to the secreted. In terms of biological role, antimicrobial peptide. This chain is Brevinin-2Rk, found in Pelophylax ridibundus (Marsh frog).